Here is a 197-residue protein sequence, read N- to C-terminus: Imidazoleglycerol-phosphate dehydratase (197 aa).

This sequence belongs to the imidazoleglycerol-phosphate dehydratase family.

It is found in the cytoplasm. The enzyme catalyses D-erythro-1-(imidazol-4-yl)glycerol 3-phosphate = 3-(imidazol-4-yl)-2-oxopropyl phosphate + H2O. The protein operates within amino-acid biosynthesis; L-histidine biosynthesis; L-histidine from 5-phospho-alpha-D-ribose 1-diphosphate: step 6/9. This chain is Imidazoleglycerol-phosphate dehydratase, found in Novosphingobium aromaticivorans (strain ATCC 700278 / DSM 12444 / CCUG 56034 / CIP 105152 / NBRC 16084 / F199).